Consider the following 288-residue polypeptide: Small ribosomal subunit protein uS2 (288 aa).

The interval 255 to 288 (ANNRDHKNNKNNSTIDNAENLKEENLVGGSNNES) is disordered.

This sequence belongs to the universal ribosomal protein uS2 family.

The chain is Small ribosomal subunit protein uS2 from Ehrlichia chaffeensis (strain ATCC CRL-10679 / Arkansas).